We begin with the raw amino-acid sequence, 392 residues long: Zinc transporter zipt-7.1 (392 aa).

N-linked (GlcNAc...) asparagine glycosylation occurs at asparagine 63. The next 2 membrane-spanning stretches (helical) occupy residues 82 to 102 and 114 to 134; these read VFSL…LFFI and ILLA…IIPH. The interval 139-162 is disordered; that stretch reads HSHGAHDHDHAHSHDHAHNDHSHD. Positions 142 to 162 are enriched in basic and acidic residues; the sequence is GAHDHDHAHSHDHAHNDHSHD. A helical membrane pass occupies residues 170 to 190; sequence GIYVIAGILVFMMVEQLVRII. The N-linked (GlcNAc...) asparagine glycan is linked to asparagine 248. A run of 3 helical transmembrane segments spans residues 255–275, 304–324, and 331–351; these read IGAS…TVLL, VTAL…NPVL, and GAIM…SVIP. N-linked (GlcNAc...) asparagine glycosylation occurs at asparagine 361. A helical membrane pass occupies residues 371–391; sequence SLVHLIAICMGVGMMYIVSLV.

It belongs to the ZIP transporter (TC 2.A.5) family. KE4/Catsup subfamily.

It is found in the membrane. Zinc transporter which regulates intracellular zinc levels. Required for spermatogenesis in both hermaphrodites and males where it resides in an inactive form in immature sperm, spermatids, but is likely activated in response to reduced spe-4 and spe-6 function. Upon activation, mediates the release of zinc from internal stores in spermatids into the cytoplasm. The resulting increase in cytoplasmic zinc levels promotes spermatid activation and subsequent differentiation into mature motile sperm that are capable of fertilization. This chain is Zinc transporter zipt-7.1, found in Caenorhabditis briggsae.